Reading from the N-terminus, the 380-residue chain is 3-dehydroquinate synthase (380 aa).

Residues 100–104 (GAASD), 124–125 (TT), Lys137, and Lys146 contribute to the NAD(+) site. Residues Glu179, His251, and His267 each coordinate Zn(2+). Residues 320 to 343 (YMQRDKKNMQSNDTDSDKDSREMP) form a disordered region.

It belongs to the sugar phosphate cyclases superfamily. Dehydroquinate synthase family. Requires NAD(+) as cofactor. The cofactor is Co(2+). It depends on Zn(2+) as a cofactor.

Its subcellular location is the cytoplasm. It carries out the reaction 7-phospho-2-dehydro-3-deoxy-D-arabino-heptonate = 3-dehydroquinate + phosphate. The protein operates within metabolic intermediate biosynthesis; chorismate biosynthesis; chorismate from D-erythrose 4-phosphate and phosphoenolpyruvate: step 2/7. Catalyzes the conversion of 3-deoxy-D-arabino-heptulosonate 7-phosphate (DAHP) to dehydroquinate (DHQ). The polypeptide is 3-dehydroquinate synthase (Tropheryma whipplei (strain Twist) (Whipple's bacillus)).